Here is a 430-residue protein sequence, read N- to C-terminus: Serine--tRNA ligase (430 aa).

238-240 provides a ligand contact to L-serine; sequence TAE. 269 to 271 serves as a coordination point for ATP; it reads RRE. Glu292 is a binding site for L-serine. 356 to 359 provides a ligand contact to ATP; it reads EISS. Ser392 contributes to the L-serine binding site.

Belongs to the class-II aminoacyl-tRNA synthetase family. Type-1 seryl-tRNA synthetase subfamily. As to quaternary structure, homodimer. The tRNA molecule binds across the dimer.

It is found in the cytoplasm. It catalyses the reaction tRNA(Ser) + L-serine + ATP = L-seryl-tRNA(Ser) + AMP + diphosphate + H(+). The enzyme catalyses tRNA(Sec) + L-serine + ATP = L-seryl-tRNA(Sec) + AMP + diphosphate + H(+). It functions in the pathway aminoacyl-tRNA biosynthesis; selenocysteinyl-tRNA(Sec) biosynthesis; L-seryl-tRNA(Sec) from L-serine and tRNA(Sec): step 1/1. Its function is as follows. Catalyzes the attachment of serine to tRNA(Ser). Is also able to aminoacylate tRNA(Sec) with serine, to form the misacylated tRNA L-seryl-tRNA(Sec), which will be further converted into selenocysteinyl-tRNA(Sec). The polypeptide is Serine--tRNA ligase (Synechocystis sp. (strain ATCC 27184 / PCC 6803 / Kazusa)).